The sequence spans 668 residues: DNA mismatch repair protein MutL (668 aa).

This sequence belongs to the DNA mismatch repair MutL/HexB family.

In terms of biological role, this protein is involved in the repair of mismatches in DNA. It is required for dam-dependent methyl-directed DNA mismatch repair. May act as a 'molecular matchmaker', a protein that promotes the formation of a stable complex between two or more DNA-binding proteins in an ATP-dependent manner without itself being part of a final effector complex. This chain is DNA mismatch repair protein MutL, found in Limosilactobacillus reuteri (strain DSM 20016) (Lactobacillus reuteri).